We begin with the raw amino-acid sequence, 155 residues long: Ribosome maturation factor RimP (155 aa).

It belongs to the RimP family.

Its subcellular location is the cytoplasm. Required for maturation of 30S ribosomal subunits. The sequence is that of Ribosome maturation factor RimP from Synechococcus sp. (strain CC9605).